Reading from the N-terminus, the 308-residue chain is Ribosomal RNA large subunit methyltransferase F (308 aa).

It belongs to the methyltransferase superfamily. METTL16/RlmF family.

The protein localises to the cytoplasm. The catalysed reaction is adenosine(1618) in 23S rRNA + S-adenosyl-L-methionine = N(6)-methyladenosine(1618) in 23S rRNA + S-adenosyl-L-homocysteine + H(+). Specifically methylates the adenine in position 1618 of 23S rRNA. This chain is Ribosomal RNA large subunit methyltransferase F, found in Escherichia coli (strain SMS-3-5 / SECEC).